A 133-amino-acid chain; its full sequence is Fluoride-specific ion channel FluC (133 aa).

4 helical membrane passes run 12-32 (LAMT…ASLI), 41-61 (WGTL…LVWL), 76-96 (IVGV…CLVF), and 104-124 (MIGI…VAGA). Na(+) is bound by residues G81 and T84.

It belongs to the fluoride channel Fluc/FEX (TC 1.A.43) family.

It is found in the cell inner membrane. It carries out the reaction fluoride(in) = fluoride(out). With respect to regulation, na(+) is not transported, but it plays an essential structural role and its presence is essential for fluoride channel function. Its function is as follows. Fluoride-specific ion channel. Important for reducing fluoride concentration in the cell, thus reducing its toxicity. This chain is Fluoride-specific ion channel FluC, found in Xanthomonas euvesicatoria pv. vesicatoria (strain 85-10) (Xanthomonas campestris pv. vesicatoria).